A 94-amino-acid chain; its full sequence is Acylphosphatase (94 aa).

In terms of domain architecture, Acylphosphatase-like spans 8 to 94 (ALHVIVKGRV…RGYTDFRIEV (87 aa)). Catalysis depends on residues arginine 23 and asparagine 41.

Belongs to the acylphosphatase family.

It carries out the reaction an acyl phosphate + H2O = a carboxylate + phosphate + H(+). The polypeptide is Acylphosphatase (acyP) (Treponema denticola (strain ATCC 35405 / DSM 14222 / CIP 103919 / JCM 8153 / KCTC 15104)).